Consider the following 330-residue polypeptide: Putative pentatricopeptide repeat-containing protein At5g36300 (330 aa).

PPR repeat units lie at residues serine 10–proline 44, aspartate 45–phenylalanine 75, valine 83–leucine 113, asparagine 114–methionine 148, aspartate 149–serine 179, asparagine 185–aspartate 215, serine 231–proline 265, asparagine 266–threonine 296, and aspartate 302–leucine 330.

It belongs to the PPR family. P subfamily.

The polypeptide is Putative pentatricopeptide repeat-containing protein At5g36300 (Arabidopsis thaliana (Mouse-ear cress)).